A 203-amino-acid chain; its full sequence is Large ribosomal subunit protein uL13 (203 aa).

Ala-2 is modified (N-acetylalanine). Position 59 is a citrulline (Arg-59). Residue Ser-77 is modified to Phosphoserine. Arg-140 carries the citrulline modification. An N6-acetyllysine modification is found at Lys-191.

This sequence belongs to the universal ribosomal protein uL13 family. As to quaternary structure, component of the 60S ribosome. Component of the GAIT complex. Interacts with EIF4G1. Post-translationally, phosphorylation at Ser-77 upon interferon-gamma treatment in macrophages involves a DAPK1-DAPK3 kinase cascade and is causing release from the ribosome, association with the GAIT complex and subsequent involvement in transcript-selective translation inhibition. Citrullinated by PADI4.

It localises to the cytoplasm. Functionally, associated with ribosomes but is not required for canonical ribosome function and has extra-ribosomal functions. Component of the GAIT (gamma interferon-activated inhibitor of translation) complex which mediates interferon-gamma-induced transcript-selective translation inhibition in inflammation processes. Upon interferon-gamma activation and subsequent phosphorylation dissociates from the ribosome and assembles into the GAIT complex which binds to stem loop-containing GAIT elements in the 3'-UTR of diverse inflammatory mRNAs (such as ceruplasmin) and suppresses their translation. In the GAIT complex interacts with m7G cap-bound eIF4G at or near the eIF3-binding site and blocks the recruitment of the 43S ribosomal complex. Involved in methylation of rRNA. This Rattus norvegicus (Rat) protein is Large ribosomal subunit protein uL13 (Rpl13a).